The sequence spans 476 residues: MVRFESTDSLMLARQLPNKTVALILAGGRGSRLKDLTATRAKPAVHFGGKFRIIDFALSNCLNSGVRRIGVITQYQSHTLVQHIQRGWSFLNEEMNEFVDLLPAQQRLSTEQWYKGTADAVCQNLDIIRRYDAEYIVILAGDHIYKMDYSRMLLDHVEKGAECTVACIPVPISEGSEFGIMEVTADYQITAFYEKPANPPPIPGDPSNALASMGIYIFNADYLFKLLEEDNNTPGSSHDFGKDIIPQLTARKVVWAHPFDLSCVTSNAELPPYWRDVGTLDAYWRANLDLASVTPELDMYDRAWPIRTHMEPLPPAKFVQDRSGSHGMTMNSLVSGGCIVSGSVVVHSVLFPRVRVNSFCTIDSSLLLPDVHVGRSCRLRRCIIDRACHIPEGMVIGENADEDNARFYRSEGGGGVSDSGYAGKVRGKIEPLGFLFVRLDLLIRLSLLIRLNLFIRMNLLIILTLFFKLASIQASH.

Alpha-D-glucose 1-phosphate contacts are provided by residues Tyr-114, Gly-179, Glu-194–Lys-195, and Ser-212.

This sequence belongs to the bacterial/plant glucose-1-phosphate adenylyltransferase family. In terms of assembly, homotetramer.

It catalyses the reaction alpha-D-glucose 1-phosphate + ATP + H(+) = ADP-alpha-D-glucose + diphosphate. It functions in the pathway glycan biosynthesis; glycogen biosynthesis. Its function is as follows. Involved in the biosynthesis of ADP-glucose, a building block required for the elongation reactions to produce glycogen. Catalyzes the reaction between ATP and alpha-D-glucose 1-phosphate (G1P) to produce pyrophosphate and ADP-Glc. The polypeptide is Glucose-1-phosphate adenylyltransferase (Yersinia pestis bv. Antiqua (strain Antiqua)).